We begin with the raw amino-acid sequence, 20 residues long: Bulb protein (20 aa).

A disordered region spans residues 1-20 (APDVHTRXTQNGLPPGXLPS).

This Narcissus pseudonarcissus (Daffodil) protein is Bulb protein.